We begin with the raw amino-acid sequence, 388 residues long: Chorismate synthase (388 aa).

NADP(+) contacts are provided by R39 and R45. FMN is bound by residues 130–132, 251–252, G296, 311–315, and R337; these read RSS, NA, and KPIPT.

This sequence belongs to the chorismate synthase family. Homotetramer. Requires FMNH2 as cofactor.

It carries out the reaction 5-O-(1-carboxyvinyl)-3-phosphoshikimate = chorismate + phosphate. Its pathway is metabolic intermediate biosynthesis; chorismate biosynthesis; chorismate from D-erythrose 4-phosphate and phosphoenolpyruvate: step 7/7. Functionally, catalyzes the anti-1,4-elimination of the C-3 phosphate and the C-6 proR hydrogen from 5-enolpyruvylshikimate-3-phosphate (EPSP) to yield chorismate, which is the branch point compound that serves as the starting substrate for the three terminal pathways of aromatic amino acid biosynthesis. This reaction introduces a second double bond into the aromatic ring system. The protein is Chorismate synthase of Streptococcus pneumoniae serotype 19F (strain G54).